The following is a 510-amino-acid chain: Probable DNA ligase (510 aa).

E210 contacts ATP. The active-site N6-AMP-lysine intermediate is K212. Residues R217, R232, E261, F296, R367, and K373 each contribute to the ATP site.

Belongs to the ATP-dependent DNA ligase family. Requires Mg(2+) as cofactor.

It catalyses the reaction ATP + (deoxyribonucleotide)n-3'-hydroxyl + 5'-phospho-(deoxyribonucleotide)m = (deoxyribonucleotide)n+m + AMP + diphosphate.. In terms of biological role, DNA ligase that seals nicks in double-stranded DNA during DNA replication, DNA recombination and DNA repair. This Saccharopolyspora erythraea (strain ATCC 11635 / DSM 40517 / JCM 4748 / NBRC 13426 / NCIMB 8594 / NRRL 2338) protein is Probable DNA ligase.